The sequence spans 253 residues: DNA polymerase III subunit epsilon (253 aa).

The a divalent metal cation site is built by Asp14 and Glu16. The substrate site is built by Asp14, Glu16, Asp63, and His68. His163 serves as the catalytic Proton acceptor. A divalent metal cation is bound at residue Asp168. Position 168 (Asp168) interacts with substrate.

DNA polymerase III contains a core (composed of alpha, epsilon and theta chains) that associates with a tau subunit. This core dimerizes to form the POLIII' complex. PolIII' associates with the gamma complex (composed of gamma, delta, delta', psi and chi chains) and with the beta chain to form the complete DNA polymerase III complex. Mg(2+) is required as a cofactor. It depends on Mn(2+) as a cofactor.

It catalyses the reaction DNA(n) + a 2'-deoxyribonucleoside 5'-triphosphate = DNA(n+1) + diphosphate. Functionally, DNA polymerase III is a complex, multichain enzyme responsible for most of the replicative synthesis in bacteria. The epsilon subunit contain the editing function and is a proofreading 3'-5' exonuclease. In Pasteurella multocida (strain Pm70), this protein is DNA polymerase III subunit epsilon (dnaQ).